The primary structure comprises 621 residues: MQDHNKKAMAGLTLAALGVVYGDIGTSPLYTLRECFVSQNLPTTPDNIFGILSLIFWSLIFVVSVKYVAFVLRADNRGEGGIMALMALARHYTTHAARWKIVLLGLFGAALFYGDAIITPAVSVLSAAEGMEVVSSGMEAYVLPMAVGVLVGLFLLQRHGTARVGLMFGPVMMVWFAILGILGLHQIIQQPAVLQALNPWHAVTFLSQHGFHAFLTLGSVVLALTGAEALYADMGHFGKTPIRRAWFSLVLPGLGLNYFGQGALLMSNPAAIKNPFFLLAPDWALLPMIALATLATVIASQAVISGAYSLTRQAILLGYCPRLEVHHTSDKEIGQIYMPFINWALLVAVLVVVLTFKNSSSLAAAYGIAVTGTMLITTMLFFVVARVNWRWPLPLALGITLLFGVIDTAFFAANVHKVADGGWLPLVMGMAIFTLMSTWKQGRDILFKRLREQALPLDDFIHNLEAYPPARVEGTAVFLTSTLHGVPHALLHNLKHNKVLHERVVLMTVRTEDIPYVPEDERLEIVQMSASFWRVMARYGFKEEPNVVEVLDKCAKEGFEMELMDTSFFLSRETIVSTGHPGMARWRQKIFLWMSKNALRATDFFQVPTNRVVELGAQVEL.

The next 12 helical transmembrane spans lie at Met9–Leu29, Ile48–Val68, Ile101–Ala121, Ser136–Leu156, Val164–Leu184, Gly210–Leu230, Trp246–Met266, Pro275–Ala295, Ile336–Phe356, Ala364–Val384, Leu393–Ala413, and Val418–Thr438.

The protein belongs to the HAK/KUP transporter (TC 2.A.72) family.

It localises to the cell inner membrane. The catalysed reaction is K(+)(in) + H(+)(in) = K(+)(out) + H(+)(out). In terms of biological role, transport of potassium into the cell. Likely operates as a K(+):H(+) symporter. This Chromobacterium violaceum (strain ATCC 12472 / DSM 30191 / JCM 1249 / CCUG 213 / NBRC 12614 / NCIMB 9131 / NCTC 9757 / MK) protein is Probable potassium transport system protein Kup 2.